The following is a 619-amino-acid chain: ESX-2 secretion system protein EccA2 (619 aa).

373–380 (GPPGTGKT) lines the ATP pocket.

Belongs to the CbxX/CfxQ family. In terms of assembly, part of the ESX-2 / type VII secretion system (T7SS), which is composed of cytosolic and membrane components. Residues 522-619 interact with an artificial EsxB-EsxA heterodimer from the adjacent ESX-1 locus.

It localises to the cytoplasm. Shows ATPase activity. Could provide energy for export of ESX-2 substrates. This Mycobacterium tuberculosis (strain ATCC 25618 / H37Rv) protein is ESX-2 secretion system protein EccA2 (eccA2).